The following is a 599-amino-acid chain: Sulfite reductase [NADPH] flavoprotein alpha-component (599 aa).

The region spanning 64-202 is the Flavodoxin-like domain; that stretch reads ITIISASQTG…AASEWRARVV (139 aa). FMN contacts are provided by residues 70–75, 117–120, and 153–162; these read SQTGNA, STQG, and LGDSSYEFFC. In terms of domain architecture, FAD-binding FR-type spans 234-448; the sequence is DAPLVASLSV…IEHNDNFRLP (215 aa). FAD is bound by residues threonine 322, alanine 356, 386–389, 404–406, tyrosine 410, and 419–422; these read RLYS, TVG, and GGAS. Residues 519–520, 525–529, and aspartate 561 each bind NADP(+); these read SR and KVYVQ. Tyrosine 599 serves as a coordination point for FAD.

The protein belongs to the NADPH-dependent sulphite reductase flavoprotein subunit CysJ family. This sequence in the N-terminal section; belongs to the flavodoxin family. It in the C-terminal section; belongs to the flavoprotein pyridine nucleotide cytochrome reductase family. As to quaternary structure, alpha(8)-beta(8). The alpha component is a flavoprotein, the beta component is a hemoprotein. FAD is required as a cofactor. The cofactor is FMN.

The enzyme catalyses hydrogen sulfide + 3 NADP(+) + 3 H2O = sulfite + 3 NADPH + 4 H(+). It functions in the pathway sulfur metabolism; hydrogen sulfide biosynthesis; hydrogen sulfide from sulfite (NADPH route): step 1/1. Its function is as follows. Component of the sulfite reductase complex that catalyzes the 6-electron reduction of sulfite to sulfide. This is one of several activities required for the biosynthesis of L-cysteine from sulfate. The flavoprotein component catalyzes the electron flow from NADPH -&gt; FAD -&gt; FMN to the hemoprotein component. This is Sulfite reductase [NADPH] flavoprotein alpha-component from Shigella flexneri serotype 5b (strain 8401).